We begin with the raw amino-acid sequence, 568 residues long: Acyl-CoA ligase gloD (568 aa).

Residues 211–219 (TSGTSGFLK), 352–357 (PGYGLT), D436, R455, and K553 each bind ATP. The interval 282–352 (DMQIALKSVQ…QLCPEWEINP (71 aa)) is SBD1. The SBD2 stretch occupies residues 353 to 415 (GYGLTESFVC…VRSPSVMKEY (63 aa)).

This sequence belongs to the ATP-dependent AMP-binding enzyme family.

Its pathway is mycotoxin biosynthesis. Its function is as follows. Acyl-CoA ligase; part of the gene cluster that mediates the biosynthesis of pneumocandins, lipohexapeptides of the echinocandin family that prevent fungal cell wall formation by non-competitive inhibition of beta-1,3-glucan synthase. The 10,12-dimethylmyristoyl side chain is synthesized by the reducing polyketide synthase gloL/GLPKS4. The thioesterase gloN/GLHYD exclusively interacts with gloL/GLPKS4 to maintain turnover of the polyketide side chain. The 10R,12S-dimethylmyristic acid is then transferred to the first thiolation domain of the nonribosomal peptide synthetase gloA/GLNRPS4 by the acyl-AMP ligase gloD/GLligase, followed by its acylation to L-ornithine to trigger elongation of the cyclic hexapeptide. L-ornithine, 4R-hydroxyl-L-proline (generated from L-proline by the dioxygenase gloF/GLOXY2), 3S-hydroxyl-L-homotyrosine (generated by gloG/GLHtyB, gloH/GLHtyA, gloI/GLHtyC, gloJ/GLHtyD and hydroxylated at C-3 by the dioxygenase gloM/GLOXY1), 3R-hydroxyl-L-glutamine (generated from L-glutamine probably by the dioxygenase gloE/GLOXY3) and 3S-hydroxyl-L-proline (generated from L-proline by the dioxygenase gloF/GLOXY2 to yield pneumocandin B0), or 3S-hydroxyl-4S-methyl-L-proline (generated from L-leucine by the dioxygenase gloC/GLOXY4 to yield pneumocandin A0) are sequentially added to the growing chain. The last C domain of gloA/GLNRPS4 is proposed to be responsible for cyclization by condensation to form the peptide bond between L-ornithine and 3S-hydroxyl-4S-methyl-L-proline (for pneumocandin A0) or 3S-hydroxyl-L-proline (for pneumocandin B0). Finally, the subsequent C-4 hydroxylation of 3S-hydroxyl-L-homotyrosine and L-ornithine dihydroxylation at C-4 and C-5 are performed by the cytochrome P450 monooxygenases gloP/GLP450-1 and gloO/GLP450-2, respectively. The sequence is that of Acyl-CoA ligase gloD from Glarea lozoyensis (strain ATCC 20868 / MF5171).